Here is a 295-residue protein sequence, read N- to C-terminus: Indole-3-glycerol phosphate synthase (295 aa).

The protein belongs to the TrpC family.

The enzyme catalyses 1-(2-carboxyphenylamino)-1-deoxy-D-ribulose 5-phosphate + H(+) = (1S,2R)-1-C-(indol-3-yl)glycerol 3-phosphate + CO2 + H2O. It participates in amino-acid biosynthesis; L-tryptophan biosynthesis; L-tryptophan from chorismate: step 4/5. In Prochlorococcus marinus (strain MIT 9211), this protein is Indole-3-glycerol phosphate synthase.